We begin with the raw amino-acid sequence, 116 residues long: Protein Rev (116 aa).

Phosphoserine; by host CK2 occurs at positions 5 and 8. The tract at residues 18 to 26 is homomultimerization; it reads LIKFLYQSN. The interval 23–48 is disordered; it reads YQSNPPPSPEGTRQARRNRRRRWRAR. The short motif at 34 to 50 is the Nuclear localization signal and RNA-binding (RRE) element; sequence TRQARRNRRRRWRARQR. The segment covering 36 to 48 has biased composition (basic residues); it reads QARRNRRRRWRAR. Positions 73–84 match the Nuclear export signal and binding to XPO1 motif; sequence LQLPPLERLNLN. Residues 90 to 116 are disordered; sequence GTSGTQGVGSPQIPVEPPAVLESGTEE. Phosphoserine; by host is present on residues S92 and S99.

This sequence belongs to the HIV-1 REV protein family. As to quaternary structure, homomultimer; when bound to the RRE. Multimeric assembly is essential for activity and may involve XPO1. Binds to human KPNB1, XPO1, TNPO1, RANBP5 and IPO7. Interacts with the viral Integrase. Interacts with human KHDRBS1. Interacts with human NAP1; this interaction decreases Rev multimerization and stimulates its activity. Interacts with human DEAD-box helicases DDX3 and DDX24; these interactions may serve for viral RNA export to the cytoplasm and packaging, respectively. Interacts with human PSIP1; this interaction may inhibit HIV-1 DNA integration by promoting dissociation of the Integrase-LEDGF/p75 complex. In terms of processing, asymmetrically arginine dimethylated at one site by host PRMT6. Methylation impairs the RNA-binding activity and export of viral RNA from the nucleus to the cytoplasm. Phosphorylated by protein kinase CK2. Presence of, and maybe binding to the N-terminus of the regulatory beta subunit of CK2 is necessary for CK2-mediated Rev's phosphorylation.

The protein resides in the host nucleus. Its subcellular location is the host nucleolus. The protein localises to the host cytoplasm. Escorts unspliced or incompletely spliced viral pre-mRNAs (late transcripts) out of the nucleus of infected cells. These pre-mRNAs carry a recognition sequence called Rev responsive element (RRE) located in the env gene, that is not present in fully spliced viral mRNAs (early transcripts). This function is essential since most viral proteins are translated from unspliced or partially spliced pre-mRNAs which cannot exit the nucleus by the pathway used by fully processed cellular mRNAs. Rev itself is translated from a fully spliced mRNA that readily exits the nucleus. Rev's nuclear localization signal (NLS) binds directly to KPNB1/Importin beta-1 without previous binding to KPNA1/Importin alpha-1. KPNB1 binds to the GDP bound form of RAN (Ran-GDP) and targets Rev to the nucleus. In the nucleus, the conversion from Ran-GDP to Ran-GTP dissociates Rev from KPNB1 and allows Rev's binding to the RRE in viral pre-mRNAs. Rev multimerization on the RRE via cooperative assembly exposes its nuclear export signal (NES) to the surface. Rev can then form a complex with XPO1/CRM1 and Ran-GTP, leading to nuclear export of the complex. Conversion from Ran-GTP to Ran-GDP mediates dissociation of the Rev/RRE/XPO1/RAN complex, so that Rev can return to the nucleus for a subsequent round of export. Beside KPNB1, also seems to interact with TNPO1/Transportin-1, RANBP5/IPO5 and IPO7/RANBP7 for nuclear import. The nucleoporin-like HRB/RIP is an essential cofactor that probably indirectly interacts with Rev to release HIV RNAs from the perinuclear region to the cytoplasm. The protein is Protein Rev of Homo sapiens (Human).